The primary structure comprises 459 residues: Cysteine--tRNA ligase (459 aa).

Cysteine 28 lines the Zn(2+) pocket. A 'HIGH' region motif is present at residues 30 to 40; it reads VTIYDLCHIGH. Residues cysteine 209, histidine 234, and glutamate 238 each coordinate Zn(2+). Positions 266-270 match the 'KMSKS' region motif; sequence KMSKS. Lysine 269 is a binding site for ATP.

The protein belongs to the class-I aminoacyl-tRNA synthetase family. Monomer. Zn(2+) is required as a cofactor.

It is found in the cytoplasm. The enzyme catalyses tRNA(Cys) + L-cysteine + ATP = L-cysteinyl-tRNA(Cys) + AMP + diphosphate. This Shewanella baltica (strain OS223) protein is Cysteine--tRNA ligase.